The sequence spans 296 residues: tRNA uridine(34) hydroxylase (296 aa).

The Rhodanese domain maps to 121–215 (AQPDVAVIDT…YLEDIPQDQS (95 aa)). The active-site Cysteine persulfide intermediate is the Cys-175.

The protein belongs to the TrhO family.

The catalysed reaction is uridine(34) in tRNA + AH2 + O2 = 5-hydroxyuridine(34) in tRNA + A + H2O. In terms of biological role, catalyzes oxygen-dependent 5-hydroxyuridine (ho5U) modification at position 34 in tRNAs. This Roseobacter denitrificans (strain ATCC 33942 / OCh 114) (Erythrobacter sp. (strain OCh 114)) protein is tRNA uridine(34) hydroxylase.